The chain runs to 267 residues: Undecaprenyl-diphosphatase (267 aa).

8 helical membrane-spanning segments follow: residues 1–21 (MTYFEAFFLALLQGFTEFLPI), 39–59 (QGLAFDVAVHVGTLAAVVIYF), 83–103 (SNLAWLIVLATIPAALFGLLF), 111–131 (LRSAWVIAATTIVFGLLLWWV), 149–169 (ALFLGIAQAMAMIPGTSRSGI), 189–209 (FLMSIPIITLAGSYLGLKLAM), 218–238 (LLSTGVIVSFISAYICIHFFL), and 246–266 (MMPFVIYRILLGSSLLVWLAL).

This sequence belongs to the UppP family.

It localises to the cell inner membrane. It catalyses the reaction di-trans,octa-cis-undecaprenyl diphosphate + H2O = di-trans,octa-cis-undecaprenyl phosphate + phosphate + H(+). In terms of biological role, catalyzes the dephosphorylation of undecaprenyl diphosphate (UPP). Confers resistance to bacitracin. This chain is Undecaprenyl-diphosphatase, found in Aliivibrio fischeri (strain ATCC 700601 / ES114) (Vibrio fischeri).